Consider the following 1324-residue polypeptide: DNA-directed RNA polymerase subunit beta' (1324 aa).

The Zn(2+) site is built by cysteine 219, cysteine 292, cysteine 299, and cysteine 302. The disordered stretch occupies residues 1293–1324 (ARDFEFASSDVEEDELTEEDDDYGDEEEEDAF). The segment covering 1302–1324 (DVEEDELTEEDDDYGDEEEEDAF) has biased composition (acidic residues).

It belongs to the RNA polymerase beta' chain family. RpoC2 subfamily. In cyanobacteria the RNAP catalytic core is composed of 2 alpha, 1 beta, 1 beta', 1 gamma and 1 omega subunit. When a sigma factor is associated with the core the holoenzyme is formed, which can initiate transcription. It depends on Zn(2+) as a cofactor.

It catalyses the reaction RNA(n) + a ribonucleoside 5'-triphosphate = RNA(n+1) + diphosphate. DNA-dependent RNA polymerase catalyzes the transcription of DNA into RNA using the four ribonucleoside triphosphates as substrates. The protein is DNA-directed RNA polymerase subunit beta' of Thermosynechococcus vestitus (strain NIES-2133 / IAM M-273 / BP-1).